We begin with the raw amino-acid sequence, 190 residues long: Elongation factor P-like protein (190 aa).

Belongs to the elongation factor P family.

The sequence is that of Elongation factor P-like protein from Marinomonas sp. (strain MWYL1).